The chain runs to 214 residues: Probable chemoreceptor glutamine deamidase CheD (214 aa).

The protein belongs to the CheD family.

It carries out the reaction L-glutaminyl-[protein] + H2O = L-glutamyl-[protein] + NH4(+). In terms of biological role, probably deamidates glutamine residues to glutamate on methyl-accepting chemotaxis receptors (MCPs), playing an important role in chemotaxis. This is Probable chemoreceptor glutamine deamidase CheD from Vibrio vulnificus (strain CMCP6).